Consider the following 550-residue polypeptide: Hydroxylamine reductase (550 aa).

Positions 3, 6, 18, and 25 each coordinate [2Fe-2S] cluster. Residues histidine 249, glutamate 273, cysteine 317, cysteine 405, cysteine 433, cysteine 458, glutamate 492, and lysine 494 each coordinate hybrid [4Fe-2O-2S] cluster. At cysteine 405 the chain carries Cysteine persulfide.

The protein belongs to the HCP family. Requires [2Fe-2S] cluster as cofactor. It depends on hybrid [4Fe-2O-2S] cluster as a cofactor.

Its subcellular location is the cytoplasm. The enzyme catalyses A + NH4(+) + H2O = hydroxylamine + AH2 + H(+). Its function is as follows. Catalyzes the reduction of hydroxylamine to form NH(3) and H(2)O. In Escherichia coli O6:K15:H31 (strain 536 / UPEC), this protein is Hydroxylamine reductase.